A 673-amino-acid polypeptide reads, in one-letter code: UvrABC system protein B (673 aa).

A Helicase ATP-binding domain is found at 26–183 (ANFEAGLAKQ…RHLTDLQYTR (158 aa)). 39–46 (GVTGSGKT) serves as a coordination point for ATP. The short motif at 92–115 (YYDYYQPEAYVPSSDTFIEKDSSI) is the Beta-hairpin element. Residues 431–597 (QVDDLMSEIH…SVERPISDIM (167 aa)) form the Helicase C-terminal domain. The tract at residues 601-631 (REDAAEKKSGKGRSKSRQVAEETPDYRAMKP) is disordered. Basic and acidic residues predominate over residues 618–630 (QVAEETPDYRAMK). A UVR domain is found at 635-670 (AGKLKSLEQKMYQHAKDLEFEAAAQIRDQIQKLKTA).

This sequence belongs to the UvrB family. In terms of assembly, forms a heterotetramer with UvrA during the search for lesions. Interacts with UvrC in an incision complex.

Its subcellular location is the cytoplasm. Its function is as follows. The UvrABC repair system catalyzes the recognition and processing of DNA lesions. A damage recognition complex composed of 2 UvrA and 2 UvrB subunits scans DNA for abnormalities. Upon binding of the UvrA(2)B(2) complex to a putative damaged site, the DNA wraps around one UvrB monomer. DNA wrap is dependent on ATP binding by UvrB and probably causes local melting of the DNA helix, facilitating insertion of UvrB beta-hairpin between the DNA strands. Then UvrB probes one DNA strand for the presence of a lesion. If a lesion is found the UvrA subunits dissociate and the UvrB-DNA preincision complex is formed. This complex is subsequently bound by UvrC and the second UvrB is released. If no lesion is found, the DNA wraps around the other UvrB subunit that will check the other stand for damage. The sequence is that of UvrABC system protein B from Xanthomonas oryzae pv. oryzae (strain MAFF 311018).